Here is a 576-residue protein sequence, read N- to C-terminus: uncharacterized protein (576 aa).

Positions 241–261 (DNTKAPSPTNTAGSRELSTPA) are enriched in polar residues. The disordered stretch occupies residues 241-270 (DNTKAPSPTNTAGSRELSTPAGSPGKASLP).

This is an uncharacterized protein from Bacillus subtilis (strain 168).